We begin with the raw amino-acid sequence, 139 residues long: ATP synthase epsilon chain (139 aa).

Belongs to the ATPase epsilon chain family. F-type ATPases have 2 components, CF(1) - the catalytic core - and CF(0) - the membrane proton channel. CF(1) has five subunits: alpha(3), beta(3), gamma(1), delta(1), epsilon(1). CF(0) has three main subunits: a, b and c.

Its subcellular location is the cell inner membrane. In terms of biological role, produces ATP from ADP in the presence of a proton gradient across the membrane. This Pseudomonas putida (strain ATCC 700007 / DSM 6899 / JCM 31910 / BCRC 17059 / LMG 24140 / F1) protein is ATP synthase epsilon chain.